We begin with the raw amino-acid sequence, 242 residues long: Small ribosomal subunit protein uS2 (242 aa).

Belongs to the universal ribosomal protein uS2 family.

The sequence is that of Small ribosomal subunit protein uS2 from Tolumonas auensis (strain DSM 9187 / NBRC 110442 / TA 4).